The following is a 482-amino-acid chain: Putative alpha-L-fucosidase (482 aa).

The first 16 residues, 1–16 (MIFLIFSILFLHLANC), serve as a signal peptide directing secretion. Residues asparagine 182, asparagine 343, asparagine 359, and asparagine 419 are each glycosylated (N-linked (GlcNAc...) asparagine).

This sequence belongs to the glycosyl hydrolase 29 family.

The catalysed reaction is an alpha-L-fucoside + H2O = L-fucose + an alcohol. Alpha-L-fucosidase is responsible for hydrolyzing the alpha-1,6-linked fucose joined to the reducing-end N-acetylglucosamine of the carbohydrate moieties of glycoproteins. This is Putative alpha-L-fucosidase from Caenorhabditis elegans.